Here is a 249-residue protein sequence, read N- to C-terminus: MGKKKKRDGAAARRQARVVVGGVRTRAAVTARRVVASAEEGCGLVGRGGGGGSGGDDGEGGCYLRLRSRRLPFVAAAVVSSRREEALGDSVAEAASSSSSRAVELLGCSGEEEAMAEKVCTQAGEDHDEESSVGDSGCGRERSATTPSSRRPPGDADSSDAESNQEAKQQMCRRSSTTSAAAFHAGATTRSFRMMAPPAAAAEIEEFLAAAERSEAERFAAKYNFDVVRGVPLDAGGAGRFEWTAVGSG.

Residues Lys-118–Ala-180 form a disordered region. Residues Ala-161–Ala-180 show a composition bias toward polar residues.

This sequence belongs to the CDI family. ICK/KRP subfamily.

This chain is Cyclin-dependent kinase inhibitor 2 (KRP2), found in Oryza sativa subsp. japonica (Rice).